Reading from the N-terminus, the 220-residue chain is MKTGALATFLALCLPATVFATTLRLSNEVDLLVLDGKKVSSSLLRGAESIELENGPHQLVFRVEKTIRLPGNEERLYISPPLVISFDTQLISQVNFQLPRLENEREASHFNAAPRLALLDGDAMPIPVKLDILAITSTAKVVDYEIETERYNKSAKRASLPQFATMMADDSTLLSDVSELDTVPPQSQTLTEQRLKYWFRLADPQTRHHFLQWAEKQPPS.

Residues 1–20 (MKTGALATFLALCLPATVFA) form the signal peptide.

It belongs to the UPF0319 family.

In Salmonella heidelberg (strain SL476), this protein is UPF0319 protein YccT.